The chain runs to 3177 residues: MEEKNVNLKTGDLVTFFSEQEEEDGYFSKSHDSAVMSNNKSKDCVFKVYPFTQYTARKALKKKAKRKLQQQQADGADANNTNSSSGGGNSNNNNNNNSNSSNNNNSSNNNNNNNNNGTTNANGENVNNEVTDLELKQLEEYQDLEDVSNESTLIQLEGRDLVYGQIVQLYQPSSNQFLFARNNIVGFRQDGSQKCYFKITPRFQNQDGCKVFSEDLVLLRHEKTGLFLNQQNFIIDQGVFGIGLSENGTFWKMAVSDVDGKSGLNILKANEPFRLFHREGGFVKVSNDKTTFTYNTKTPSSINSLFEIEFENNNLISPLLRSQKDLQLQQKDNTDQLQQQQQKDKDKDNPLKQSYGSLSNSNILLQNNNNNNNNNNSNNNNNSNNNSNNSNGNNSNGNNNNNNSNNIFTSNEVHIGQSFWIRLVGTKKYLSLKESSDDSLKDNPLIVVTEDQKYSPSATFSFVKRDKANEDVIFGSFVRIQSLSKQYLHFISDETFHHNGELVGSKKYYKNDDFQIKQIPKSQLEDYGFVLSRINKIQNYLYQSSSNSSSSLMSSINGIGQSSFSSLAGATTTTTNSGGSNNINNNNNNNNNNNNNNNNNNNNNNNNNIDKKRATVQEIKAIIVEFIKFCTQSEVEDPLDREGTPIKTHQKLLSHPSHLSVLLDYLKRLFEPFDPASILFVYRLLKQMAKSNIKNGIIINEHLDQISPPSIRDKTIPLHFGAILYEVYKNNNILLEALTEDKVQEFINVIKQKKEPKYMELLSEICICYGKPIVKNQQYLCDLLLEKNSNLLFKTRVIGGSLEIERQNPAPKWVDITAFALSVDEKTHRYFEQSLALYSNVSKGRNYNGIRLVGQRITHKECLLALKEESLPYSLRGCYINILIHVYMDCHPQHYVPQINYVWNPSIVNNTKTIELLQLYQQYNITGSLHQRNSSIQNPYSTVSNGNISISSNNPISTTNTTTGSGGGGGGSGFMPTVGPSYGQASSPLSNGAIVNSLASTNLNNQTPTSLNLFNLNSPNNTTTTTNNSTNNTTNNNTNNNNNNNNTNSLITSTTHLIQLVSPQQNNNSNNNNNNNILNSIPTSPIVGSTNHGQLSHSGSNQTPLYQQQQQQQQQQQQQNSLSLFREDDIFSTFVNLEIQADKEPSTTTQLLISLLSKSEYFSNFNNGFPTSHRPQLAFFHKILIAVGYAFKFGFFRKKERVLLKRLRYILEFEHEPVNTFKEVDLGRTMGGSRMLEDESVIYVSIKIEIVNILHLMLSFQKKNIMDVFLYDFSNMSQSAFSQPENVKNQLIDRLTTNYQRDGHQDLSLCTVLFKLLKHENNQLSSLSLSLLNRIYKYRSIYAMLWSPIQKLFLLPNELTPTYKESLQKMESLTVTCFAPLTDDSTQESLRSLAFFIHLVTDSDPIKLVKNQKLLHVIGVHKTIIGVLKIGCSLDDLILDQSQPQHSQQQQQQHQQQPINISGSIDESSSTIPPLTTTTTTTTTTTTTTTTTQQSINFKSLLNSKTNSQSIHVAKIFRSCYEFLKVFCRDNRENQKVLFGEIEFLIGHLIRYGNVFGTVETLIEVFKNNIELAINFGNSPYLKLLVKFIINLSIDQLDPMFLRLLSVLILPCNENSVIENQISVTNLFKEYKSKISKLLVPISTMKEVMKDPKLLSKHYNVNSSNVYKLHLALQEILNHSLNDDGAGIGIGTTVIGGSIIGGSITTTAQTNINTITNTPTNNNSNNSNNNNTTNNNGTISHRHSNSTNTTQSVYPRLIRSSAKAQIVNSSVEILPKEFVINLELILLLKACSHGINTPTEVICREFLSMGECFDILIVRSDGNGKENSSLMINETKEYLENNLLFRFKSAYLSFLHEVFFNSDTLKGDLLALQLNHDLWSLIDQFTNQLNHLVTICAMNQMGQLYYVQMARNIIIPMVSVLERFYSQCFYFDKATQIHLTYSGRLMASLMKLYWKDPSLTIPFNQQNTSRYQSSLNMSPTNYDDSDTSEGGYHPILQGLDPEERVNIYSNLVKCLKAMDRSALSPIVPASVSTINISNVIKGCEDVINRTEHPNSRNRTETIDSSNSSPPLILSKSSSIYIDFTRLNNFVKLSKIRGYTEIAMMVNQSLSITPFIISHPNYNSNNSNNGNNNNNNNNGGGGNGNGGTIRSNSYISGGGGGSTTKRRTSRNNSNISDISNSGKGGSTISNRFQNSFSNTFIQQQQIGITNQRHINSGNTNIVTTVTSKSTNFLEILVFQLRNSLYDNDEMKINCIRILSSLLYINKERKPDIQNIMTDLYCHSAVIGLLSSKNIEIQFESLSLLLALLDDSVNVDNPLPNPKVKDDIQSHFSSSPDIQFFRDIYAMIERAKINLRDTKRNIHRIEHVKMGNNTVLGGNLTSKNSIKSSINNGNNSNNNNNRNGRVIDGCETNPYSTEFQLLQNIFRVLQLLCQGTTNIFKKSIRSQPDNYKSYDILKEMCQFLKILETIVNIDSDSIELGLRFFACMKEIVKNTPENQIAVTNVQVCKAVCNILKKTKENDPSKELKELKYLDLKIEVVDFLLHVIDKEDPRVMSKLIPELDYKVIESNTQVISQRSNHETNEKSIKLASMTFRLIKILADNDKSHNIQLEDCLLKCGEHCKSRIGRVELLYQNKLERIYFPIPNYSRRLILEDKEQSKIKNDENLLQENLEEHFINNKISWNKATEKIDAFMDYSEYKLIELEHLHNLKLNSMSYYLVSHTDKFKFLSFFLALIINLLLIIYSINSPPDLKQFKSDISDDYGIASWWAGFLPLTILQTICCILACVGFFLRKGPVLLYQNWVNYLKTHGHKKNFMFYTNDQRMHSLRQTFKYKFIPLNAKFLMTDLKAVYNILAVICSVLGIIYSPYFFAFHIFQFSLNTKALSLVLKAITMNKKTLLVMGVFILQAIYLLSIFSFVWFQEHYKDDDSEYMCGSLLQCFITNLYYGVPSQGQLIQFIKYNFPNNYLNTTDSTGSPTLEPIKTSNTVSARIIGWTVFNVAFYVVISLILLNVILGIIVDTFGQLRDQRAETEDYKSNVCFICSIERETFQKNSIEFKKHIEDDHNKWHYLYFFAYLKERCTNNQMNQLSELECSIADGITNRSYISFFPIEMSMSLQGIENANRKKEESIDQHAKLLDDVEKKITHNISTQFNQSISLLIDEIKNLRQQVSDLKQQQK.

At 1–1175 (MEEKNVNLKT…NNGFPTSHRP (1175 aa)) the chain is on the cytoplasmic side. Residues 62-125 (KKAKRKLQQQ…NGTTNANGEN (64 aa)) are disordered. A compositionally biased stretch (low complexity) spans 79 to 125 (NNTNSSSGGGNSNNNNNNNSNSSNNNNSSNNNNNNNNNGTTNANGEN). 289-293 (KTTFT) contributes to the 1D-myo-inositol 1,4,5-trisphosphate binding site. 3 stretches are compositionally biased toward low complexity: residues 329 to 341 (QQKD…QQQQ), 351 to 405 (LKQS…NNSN), and 570 to 608 (ATTT…NNNN). Disordered stretches follow at residues 329–405 (QQKD…NNSN) and 570–609 (ATTT…NNNI). 1D-myo-inositol 1,4,5-trisphosphate is bound by residues 608-611 (NIDK) and 692-694 (NIK). The segment covering 947 to 963 (NISISSNNPISTTNTTT) has biased composition (low complexity). Disordered regions lie at residues 947 to 983 (NISI…PSYG), 1009 to 1049 (TSLN…NTNS), and 1063 to 1121 (PQQN…QQNS). Residues 964–973 (GSGGGGGGSG) show a composition bias toward gly residues. The span at 1066 to 1081 (NNNSNNNNNNNILNSI) shows a compositional bias: low complexity. A compositionally biased stretch (polar residues) spans 1082–1106 (PTSPIVGSTNHGQLSHSGSNQTPLY). Low complexity predominate over residues 1107–1119 (QQQQQQQQQQQQQ). Residues 1176–1196 (QLAFFHKILIAVGYAFKFGFF) traverse the membrane as a helical segment. At 1197-2723 (RKKERVLLKR…SYYLVSHTDK (1527 aa)) the chain is on the lumenal side. Asparagine 1275 carries N-linked (GlcNAc...) asparagine glycosylation. Over residues 1443 to 1458 (QPQHSQQQQQQHQQQP) the composition is skewed to low complexity. Residues 1443 to 1490 (QPQHSQQQQQQHQQQPINISGSIDESSSTIPPLTTTTTTTTTTTTTTT) form a disordered region. The segment covering 1459 to 1475 (INISGSIDESSSTIPPL) has biased composition (polar residues). Asparagine 1460 is a glycosylation site (N-linked (GlcNAc...) asparagine). Residues 1476-1490 (TTTTTTTTTTTTTTT) are compositionally biased toward low complexity. Residues asparagine 1591, asparagine 1662, asparagine 1678, asparagine 1722, asparagine 1725, asparagine 1730, asparagine 1731, asparagine 1736, asparagine 1745, asparagine 1748, asparagine 1768, asparagine 1827, asparagine 1833, asparagine 1967, asparagine 2035, asparagine 2048, asparagine 2057, asparagine 2106, and asparagine 2124 are each glycosylated (N-linked (GlcNAc...) asparagine). Over residues 1715-1739 (ITNTPTNNNSNNSNNNNTTNNNGTI) the composition is skewed to low complexity. Positions 1715 to 1751 (ITNTPTNNNSNNSNNNNTTNNNGTISHRHSNSTNTTQ) are disordered. Basic and acidic residues predominate over residues 2050–2061 (TEHPNSRNRTET). The interval 2050-2069 (TEHPNSRNRTETIDSSNSSP) is disordered. The span at 2125-2136 (NSNNGNNNNNNN) shows a compositional bias: low complexity. The disordered stretch occupies residues 2125–2188 (NSNNGNNNNN…NSGKGGSTIS (64 aa)). Positions 2137–2146 (NGGGGNGNGG) are enriched in gly residues. Over residues 2169 to 2180 (RNNSNISDISNS) the composition is skewed to low complexity. Asparagine 2170, asparagine 2173, asparagine 2370, asparagine 2377, asparagine 2392, and asparagine 2644 each carry an N-linked (GlcNAc...) asparagine glycan. A helical membrane pass occupies residues 2724–2744 (FKFLSFFLALIINLLLIIYSI). Over 2745 to 2769 (NSPPDLKQFKSDISDDYGIASWWAG) the chain is Cytoplasmic. The helical transmembrane segment at 2770–2790 (FLPLTILQTICCILACVGFFL) threads the bilayer. The Lumenal portion of the chain corresponds to 2791-2853 (RKGPVLLYQN…TDLKAVYNIL (63 aa)). Residues 2854–2874 (AVICSVLGIIYSPYFFAFHIF) form a helical membrane-spanning segment. The Cytoplasmic portion of the chain corresponds to 2875–2896 (QFSLNTKALSLVLKAITMNKKT). The helical transmembrane segment at 2897–2917 (LLVMGVFILQAIYLLSIFSFV) threads the bilayer. The Lumenal segment spans residues 2918 to 2995 (WFQEHYKDDD…VSARIIGWTV (78 aa)). N-linked (GlcNAc...) asparagine glycosylation is present at asparagine 2967. The helical transmembrane segment at 2996–3016 (FNVAFYVVISLILLNVILGII) threads the bilayer. Residues 3017–3177 (VDTFGQLRDQ…QVSDLKQQQK (161 aa)) are Cytoplasmic-facing. The stretch at 3118–3177 (IENANRKKEESIDQHAKLLDDVEKKITHNISTQFNQSISLLIDEIKNLRQQVSDLKQQQK) forms a coiled coil.

It belongs to the InsP3 receptor family.

The protein localises to the endoplasmic reticulum membrane. In terms of biological role, may be a receptor for inositol 1,4,5 trisphosphate which governs calcium fluxes from the endoplasmic reticulum stores into the cytosol. May be involved in autophagic cell death. The sequence is that of Inositol 1,4,5-trisphosphate receptor-like protein A (iplA) from Dictyostelium discoideum (Social amoeba).